Here is a 350-residue protein sequence, read N- to C-terminus: Probable sugar phosphate/phosphate translocator At4g32390 (350 aa).

Helical transmembrane passes span 15–35, 49–69, 89–109, 112–132, 146–166, 168–188, 205–225, 235–255, 263–283, and 286–306; these read ILLSYTYVAIWIFLSFTVIVY, FPITLTMIHMAFCSSLAVILI, VVPIGALYSLSLWLSNSAYIY, VSFIQMLKALMPVAVYSIGVL, MLSISFGVAIAAYGEAKFDTW, VMLQLGAVAFEATRLVLIQIL, VAPCCLVFLFFPWIFVELPIL, FVIFGTNSVCAFALNLAVFLL, TMNVAGVVKDWLLIAFSWSVI, and TVTPLNLFGYGLAFLGVAYYN. An EamA domain is found at 38-155; the sequence is YILDKKMYNW…MLSISFGVAI (118 aa). The disordered stretch occupies residues 324–350; it reads QGDEEEAGKLLEERESEAAAKRNETED.

Belongs to the TPT transporter family. TPT (TC 2.A.7.9) subfamily.

Its subcellular location is the membrane. This Arabidopsis thaliana (Mouse-ear cress) protein is Probable sugar phosphate/phosphate translocator At4g32390.